The following is a 285-amino-acid chain: Acetyl-coenzyme A carboxylase carboxyl transferase subunit beta (285 aa).

The 264-residue stretch at 22–285 folds into the CoA carboxyltransferase N-terminal domain; it reads LWTKCEACGA…HPGVAYAPGV (264 aa). Zn(2+)-binding residues include Cys-26, Cys-29, Cys-45, and Cys-48. The segment at 26–48 adopts a C4-type zinc-finger fold; sequence CEACGAQIYKKEFQENLHVCPKC.

This sequence belongs to the AccD/PCCB family. In terms of assembly, acetyl-CoA carboxylase is a heterohexamer composed of biotin carboxyl carrier protein (AccB), biotin carboxylase (AccC) and two subunits each of ACCase subunit alpha (AccA) and ACCase subunit beta (AccD). Requires Zn(2+) as cofactor.

The protein localises to the cytoplasm. The enzyme catalyses N(6)-carboxybiotinyl-L-lysyl-[protein] + acetyl-CoA = N(6)-biotinyl-L-lysyl-[protein] + malonyl-CoA. Its pathway is lipid metabolism; malonyl-CoA biosynthesis; malonyl-CoA from acetyl-CoA: step 1/1. In terms of biological role, component of the acetyl coenzyme A carboxylase (ACC) complex. Biotin carboxylase (BC) catalyzes the carboxylation of biotin on its carrier protein (BCCP) and then the CO(2) group is transferred by the transcarboxylase to acetyl-CoA to form malonyl-CoA. This chain is Acetyl-coenzyme A carboxylase carboxyl transferase subunit beta, found in Thermus thermophilus (strain ATCC BAA-163 / DSM 7039 / HB27).